Here is a 118-residue protein sequence, read N- to C-terminus: Large ribosomal subunit protein bL20 (118 aa).

The protein belongs to the bacterial ribosomal protein bL20 family.

Functionally, binds directly to 23S ribosomal RNA and is necessary for the in vitro assembly process of the 50S ribosomal subunit. It is not involved in the protein synthesizing functions of that subunit. In Campylobacter curvus (strain 525.92), this protein is Large ribosomal subunit protein bL20.